Consider the following 366-residue polypeptide: Chorismate synthase (366 aa).

The NADP(+) site is built by arginine 48 and arginine 54. FMN is bound by residues 125–127 (RSS), 238–239 (NA), glycine 278, 293–297 (KPTSS), and arginine 319.

Belongs to the chorismate synthase family. As to quaternary structure, homotetramer. FMNH2 is required as a cofactor.

It carries out the reaction 5-O-(1-carboxyvinyl)-3-phosphoshikimate = chorismate + phosphate. It participates in metabolic intermediate biosynthesis; chorismate biosynthesis; chorismate from D-erythrose 4-phosphate and phosphoenolpyruvate: step 7/7. In terms of biological role, catalyzes the anti-1,4-elimination of the C-3 phosphate and the C-6 proR hydrogen from 5-enolpyruvylshikimate-3-phosphate (EPSP) to yield chorismate, which is the branch point compound that serves as the starting substrate for the three terminal pathways of aromatic amino acid biosynthesis. This reaction introduces a second double bond into the aromatic ring system. The chain is Chorismate synthase from Cellvibrio japonicus (strain Ueda107) (Pseudomonas fluorescens subsp. cellulosa).